Here is a 300-residue protein sequence, read N- to C-terminus: Protoheme IX farnesyltransferase (300 aa).

9 consecutive transmembrane segments (helical) span residues 26-46 (VVQL…PGLP), 54-74 (IAWA…FNCI), 102-122 (LLFS…LVNP), 123-143 (LTMW…TLIL), 150-170 (NIVI…AAMT), 177-197 (ALIL…ALAL), 224-244 (VLLY…YGMS), 246-266 (WPYL…GFAL), and 279-299 (FRFS…DHYL).

The protein belongs to the UbiA prenyltransferase family. Protoheme IX farnesyltransferase subfamily.

It localises to the cell inner membrane. It carries out the reaction heme b + (2E,6E)-farnesyl diphosphate + H2O = Fe(II)-heme o + diphosphate. Its pathway is porphyrin-containing compound metabolism; heme O biosynthesis; heme O from protoheme: step 1/1. Functionally, converts heme B (protoheme IX) to heme O by substitution of the vinyl group on carbon 2 of heme B porphyrin ring with a hydroxyethyl farnesyl side group. The protein is Protoheme IX farnesyltransferase of Verminephrobacter eiseniae (strain EF01-2).